Consider the following 388-residue polypeptide: Acetate kinase (388 aa).

Asn14 is a binding site for Mg(2+). Lys21 is an ATP binding site. A substrate-binding site is contributed by Arg80. Asp137 serves as the catalytic Proton donor/acceptor. Residues 197-201 (HLGNG), 271-273 (DFR), and 319-323 (GIGEH) contribute to the ATP site. Glu373 contributes to the Mg(2+) binding site.

This sequence belongs to the acetokinase family. In terms of assembly, homodimer. The cofactor is Mg(2+). Mn(2+) serves as cofactor.

It localises to the cytoplasm. It carries out the reaction acetate + ATP = acetyl phosphate + ADP. Its pathway is metabolic intermediate biosynthesis; acetyl-CoA biosynthesis; acetyl-CoA from acetate: step 1/2. Catalyzes the formation of acetyl phosphate from acetate and ATP. Can also catalyze the reverse reaction. The sequence is that of Acetate kinase from Mycobacterium marinum (strain ATCC BAA-535 / M).